The chain runs to 125 residues: MSRFRGCSSSGVRFCSAEREASGSGRGNVLQFVQEPQAQQSRPFPAGAQLSLELLFSDWGMEWAQPRLPKPALPLPVVVAFSRAADCAVDHHFRFCLLLRLLRQLLTLLRDEEREVNPWQRKIVV.

This is an uncharacterized protein from Homo sapiens (Human).